A 227-amino-acid chain; its full sequence is Phosphoglycolate phosphatase (227 aa).

Residue Asp8 is the Nucleophile of the active site. Mg(2+)-binding residues include Asp8 and Asp10. Substrate is bound at residue Lys150. Mg(2+) is bound by residues Asp173 and Asp177.

The protein belongs to the archaeal SPP-like hydrolase family. Requires Mg(2+) as cofactor.

It carries out the reaction 2-phosphoglycolate + H2O = glycolate + phosphate. Its function is as follows. Catalyzes the dephosphorylation of 2-phosphoglycolate. This Sulfolobus acidocaldarius (strain ATCC 33909 / DSM 639 / JCM 8929 / NBRC 15157 / NCIMB 11770) protein is Phosphoglycolate phosphatase.